The sequence spans 145 residues: Mitochondrial import receptor subunit TOM20 homolog (145 aa).

Topologically, residues 1-6 (MVGRNS) are mitochondrial intermembrane. A helical membrane pass occupies residues 7–24 (AIAAGVCGALFIGYCIYF). Residues 25–145 (DRKRRSDPNF…AQSLAEDDVE (121 aa)) lie on the Cytoplasmic side of the membrane. Glycyl lysine isopeptide (Lys-Gly) (interchain with G-Cter in ubiquitin) cross-links involve residues K35, K56, K61, and K68. Residues S135 and S138 each carry the phosphoserine modification.

Belongs to the Tom20 family. In terms of assembly, forms part of the preprotein translocase complex of the outer mitochondrial membrane (TOM complex) which consists of at least 7 different proteins (TOMM5, TOMM6, TOMM7, TOMM20, TOMM22, TOMM40 and TOMM70). Interacts with TOM22. Interacts with APEX1. Interacts with TBC1D21. Upon mitochondrial depolarization, interacts with PINK1; the interaction is required for PINK1-TOM-TIM23 supercomplex formation which is critical for PINK1 stabilization at the outer mitochondrial membrane, kinase activation and downstream mitophagy. Ubiquitinated by PRKN during mitophagy, leading to its degradation and enhancement of mitophagy. Deubiquitinated by USP30.

It is found in the mitochondrion outer membrane. Its function is as follows. Central component of the receptor complex responsible for the recognition and translocation of cytosolically synthesized mitochondrial preproteins. Together with TOM22 functions as the transit peptide receptor at the surface of the mitochondrion outer membrane and facilitates the movement of preproteins into the TOM40 translocation pore. Required for the translocation across the mitochondrial outer membrane of cytochrome P450 monooxygenases. This chain is Mitochondrial import receptor subunit TOM20 homolog (TOMM20), found in Bos taurus (Bovine).